The sequence spans 186 residues: NADH dehydrogenase [ubiquinone] 1 beta subcomplex subunit 8, mitochondrial (186 aa).

The N-terminal 28 residues, 1-28 (MAVARAGVLGVQWLQRASRNVMPLGART), are a transit peptide targeting the mitochondrion. Residues 133-153 (LFGFLAFMIFMCWVGDVYPVY) form a helical membrane-spanning segment.

It belongs to the complex I NDUFB8 subunit family. As to quaternary structure, complex I is composed of 45 different subunits.

The protein localises to the mitochondrion inner membrane. Functionally, accessory subunit of the mitochondrial membrane respiratory chain NADH dehydrogenase (Complex I), that is believed not to be involved in catalysis. Complex I functions in the transfer of electrons from NADH to the respiratory chain. The immediate electron acceptor for the enzyme is believed to be ubiquinone. This Homo sapiens (Human) protein is NADH dehydrogenase [ubiquinone] 1 beta subcomplex subunit 8, mitochondrial (NDUFB8).